A 265-amino-acid chain; its full sequence is MIKWPWKVQESAHQTALPWQEALSIPLLTCLTEQEQSKLVTLAERFLQQKRLVPLQGFELDSLRSCRIALLFCLPVLELGLEWLDGFHEVLIYPAPFVVDDEWEDDIGLVHNQRIVQSGQSWQQGPIVLNWLDIQDSFDASGFNLIIHEVAHKLDTRNGDRASGVPFIPLREVAGWEHDLHAAMNNIQEEIELVGDNAASIDAYAASDPAECFAVLSEYFFSAPELFAPRFPSLWQRFCQFYQQDPLQRLHRTNDTDSFSATNVH.

Residues histidine 111, histidine 148, histidine 152, and glutamate 211 each contribute to the Zn(2+) site.

It belongs to the MtfA family. In terms of assembly, interacts with Mlc. The cofactor is Zn(2+).

It is found in the cytoplasm. Involved in the modulation of the activity of the glucose-phosphotransferase system (glucose-PTS). Interacts with the transcriptional repressor Mlc, preventing its interaction with DNA and leading to the modulation of expression of genes regulated by Mlc, including ptsG, which encodes the PTS system glucose-specific EIICB component. Functionally, shows zinc-dependent metallopeptidase activity. This Escherichia coli (strain SMS-3-5 / SECEC) protein is Mlc titration factor A.